The chain runs to 560 residues: MPKNMETLQRSYMGPSTPNHNLFNNATELPDDLNFSTMDVPYDGSMPMNMSSDSLMNLLEDRSKKLACAVDTELARESTASEFVAGFSADSPQAQLAETGAETGAAGGSKRKASEVDSDSDSDDSSKGKKLVNKPKIRQRYKKATIQNRTSLTEERQYSTEICTVAAPDQIAKYFAQDFSAHLNEVKSECQMSANRFSDYISETGYYVFVVKKGDRKPFEVVFAKFVNNATNEYTNNYYMVDNRVFVVSLNNVKFMVSYKLVREQGIDIPPHVNLCNDAQAERTPLNCYFEPVKNAFQATLINHFHLDMFYAQTTFVTLMQAVGENKTNMLLNKLYQMYQDRSLFTLPIMLSRKEPVNENAPQNKNHAFSYVAQIMKYSKNLRFPQGDPTQQVMDRLEEIVTQKSSLTYKYSSVANLLFNRYGRRDNNADALKKVKKEDGNRLLVEQYMSYNENDDTSHNFIVLQFGGVNDERLTIAKRGKEFYWIAGEIKDISVDDLIKKYARNVHHVFRIINVNRRESTTWHNNLLKLLQLLLQNLIRLEDVQRYSDKSDTKFVYKKV.

2 disordered regions span residues 1–25 and 99–134; these read MPKN…LFNN and TGAE…LVNK.

Belongs to the nucleopolyhedrovirus IE-1 protein family.

Functionally, regulatory transcriptional protein, which trans-activates gene expression from early baculovirus promoters. Can also trans-activate its own promoter, suggesting that it is autoregulated during normal infection of insect cells. The polypeptide is Trans-activating transcriptional regulatory protein (IE1) (Orgyia pseudotsugata (Douglas-fir tussock moth)).